Reading from the N-terminus, the 36-residue chain is Adenylate kinase (36 aa).

10–15 provides a ligand contact to ATP; the sequence is GAGKGT. The NMP stretch occupies residues 30 to 36; it reads ATGDLFR. 2 residues coordinate AMP: threonine 31 and arginine 36.

It belongs to the adenylate kinase family. Monomer.

Its subcellular location is the cytoplasm. The enzyme catalyses AMP + ATP = 2 ADP. The protein operates within purine metabolism; AMP biosynthesis via salvage pathway; AMP from ADP: step 1/1. In terms of biological role, catalyzes the reversible transfer of the terminal phosphate group between ATP and AMP. Plays an important role in cellular energy homeostasis and in adenine nucleotide metabolism. This chain is Adenylate kinase (adk), found in Streptomyces griseus.